Reading from the N-terminus, the 473-residue chain is Siroheme synthase (473 aa).

A precorrin-2 dehydrogenase /sirohydrochlorin ferrochelatase region spans residues 1–203 (MTLFPIFADL…QQPGLAEQEL (203 aa)). NAD(+)-binding positions include 22–23 (AV) and 43–44 (PR). Position 128 is a phosphoserine (serine 128). The uroporphyrinogen-III C-methyltransferase stretch occupies residues 216-473 (GSVVLVGAGP…GLPGPQALAA (258 aa)). Proline 225 is an S-adenosyl-L-methionine binding site. The active-site Proton acceptor is aspartate 248. Lysine 270 acts as the Proton donor in catalysis. Residues 302–304 (GGD), isoleucine 307, 332–333 (TA), methionine 384, and glycine 413 contribute to the S-adenosyl-L-methionine site.

It in the N-terminal section; belongs to the precorrin-2 dehydrogenase / sirohydrochlorin ferrochelatase family. In the C-terminal section; belongs to the precorrin methyltransferase family.

It catalyses the reaction uroporphyrinogen III + 2 S-adenosyl-L-methionine = precorrin-2 + 2 S-adenosyl-L-homocysteine + H(+). It carries out the reaction precorrin-2 + NAD(+) = sirohydrochlorin + NADH + 2 H(+). The enzyme catalyses siroheme + 2 H(+) = sirohydrochlorin + Fe(2+). The protein operates within cofactor biosynthesis; adenosylcobalamin biosynthesis; precorrin-2 from uroporphyrinogen III: step 1/1. It functions in the pathway cofactor biosynthesis; adenosylcobalamin biosynthesis; sirohydrochlorin from precorrin-2: step 1/1. Its pathway is porphyrin-containing compound metabolism; siroheme biosynthesis; precorrin-2 from uroporphyrinogen III: step 1/1. It participates in porphyrin-containing compound metabolism; siroheme biosynthesis; siroheme from sirohydrochlorin: step 1/1. The protein operates within porphyrin-containing compound metabolism; siroheme biosynthesis; sirohydrochlorin from precorrin-2: step 1/1. In terms of biological role, multifunctional enzyme that catalyzes the SAM-dependent methylations of uroporphyrinogen III at position C-2 and C-7 to form precorrin-2 via precorrin-1. Then it catalyzes the NAD-dependent ring dehydrogenation of precorrin-2 to yield sirohydrochlorin. Finally, it catalyzes the ferrochelation of sirohydrochlorin to yield siroheme. This chain is Siroheme synthase, found in Bordetella parapertussis (strain 12822 / ATCC BAA-587 / NCTC 13253).